Consider the following 170-residue polypeptide: Cathelicidin antimicrobial peptide (170 aa).

An N-terminal signal peptide occupies residues 1–30 (MKTQRDGHSLGRWSLVLLLLGLVMPLAIVA). Positions 31–131 (QVLSYKEAVL…DISCDKDNKR (101 aa)) are cleaved as a propeptide — cathelin-like domain (CLD). Intrachain disulfides connect C86–C97 and C108–C125. Positions 150-162 (FKRIVQRIKDFLR) are active core.

Belongs to the cathelicidin family. As to quaternary structure, monomer, homodimer or homotrimer (in vitro). Oligomerizes as tetra- or hexamer in solution (in vitro). Post-translationally, proteolytically cleaved by proteinase PRTN3 into antibacterial peptide LL-37. Proteolytically cleaved by cathepsin CTSG and neutrophil elastase ELANE. Resistant to proteolytic degradation in solution, and when bound to both zwitterionic (mimicking mammalian membranes) and negatively charged membranes (mimicking bacterial membranes). In terms of processing, after secretion onto the skin surface, the CAMP gene product is processed by a serine protease-dependent mechanism into multiple novel antimicrobial peptides distinct from and shorter than cathelicidin LL-37. These peptides show enhanced antimicrobial action, acquiring the ability to kill skin pathogens such as S.aureus, E.coli and C.albicans. These peptides have lost the ability to stimulate CXCL8/IL8 release from keratinocytes. The peptides act synergistically, killing bacteria at lower concentrations when present together, and maintain activity at increased salt condition.

It localises to the secreted. The protein resides in the vesicle. Functionally, antimicrobial protein that is an integral component of the innate immune system. Binds to bacterial lipopolysaccharides (LPS). Acts via neutrophil N-formyl peptide receptors to enhance the release of CXCL2. Postsecretory processing generates multiple cathelicidin antimicrobial peptides with various lengths which act as a topical antimicrobial defense in sweat on skin. The unprocessed precursor form, cathelicidin antimicrobial peptide, inhibits the growth of Gram-negative E.coli and E.aerogenes with efficiencies comparable to that of the mature peptide LL-37 (in vitro). Antimicrobial peptide that is an integral component of the innate immune system. Binds to bacterial lipopolysaccharides (LPS). Causes membrane permeabilization by forming transmembrane pores (in vitro). Causes lysis of E.coli. Exhibits antimicrobial activity against Gram-negative bacteria such as P.aeruginosa, S.typhimurium, E.aerogenes, E.coli and P.syringae, Gram-positive bacteria such as L.monocytogenes, S.epidermidis, S.pyogenes and S.aureus, as well as vancomycin-resistant enterococci (in vitro). Exhibits antimicrobial activity against methicillin-resistant S.aureus, P.mirabilis, and C.albicans in low-salt media, but not in media containing 100 mM NaCl (in vitro). Forms chiral supramolecular assemblies with quinolone signal (PQS) molecules of P.aeruginosa, which may lead to interference of bacterial quorum signaling and perturbance of bacterial biofilm formation. May form supramolecular fiber-like assemblies on bacterial membranes. Induces cytokine and chemokine producation as well as TNF/TNFA and CSF2/GMCSF production in normal human keratinocytes. Exhibits hemolytic activity against red blood cells. In terms of biological role, exhibits antimicrobial activity against E.coli and B.megaterium (in vitro). The protein is Cathelicidin antimicrobial peptide of Pan troglodytes (Chimpanzee).